A 545-amino-acid polypeptide reads, in one-letter code: Pentatricopeptide repeat-containing protein At4g18840 (545 aa).

PPR repeat units lie at residues 104–138 (NGFT…PVFP), 139–173 (DKYS…GLVT), 174–204 (DVFV…MPVR), 205–239 (DAVS…NVES), 240–266 (WNFM…MPVR), 267–301 (DVVS…STEK), 303–337 (DGFT…GIEI), 338–368 (EGFL…TSKR), 369–403 (DVST…GFKP), 404–434 (NGIT…MSSV), and 440–474 (TIEH…EASI). The type E motif stretch occupies residues 475-545 (LLESLLGACK…ERVNRSLDVA (71 aa)).

It belongs to the PPR family. PCMP-E subfamily.

The protein is Pentatricopeptide repeat-containing protein At4g18840 (PCMP-E101) of Arabidopsis thaliana (Mouse-ear cress).